The primary structure comprises 138 residues: Putative pre-16S rRNA nuclease (138 aa).

Belongs to the YqgF nuclease family.

It is found in the cytoplasm. Functionally, could be a nuclease involved in processing of the 5'-end of pre-16S rRNA. This Geobacillus kaustophilus (strain HTA426) protein is Putative pre-16S rRNA nuclease.